Here is a 1052-residue protein sequence, read N- to C-terminus: Focal adhesion kinase 1 (1052 aa).

A disordered region spans residues 1-27; sequence MAAAYLDPNLNHTPSSSTKTHLGTGME. Ala2 carries the post-translational modification N-acetylalanine. Tyr5 is modified (phosphotyrosine). A compositionally biased stretch (polar residues) spans 10–21; it reads LNHTPSSSTKTH. A Phosphothreonine modification is found at Thr13. Residues Ser29 and Ser54 each carry the phosphoserine modification. The region spanning 35–355 is the FERM domain; that stretch reads RVLKVFHYFE…GYCRLVNGAT (321 aa). Residue Lys152 forms a Glycyl lysine isopeptide (Lys-Gly) (interchain with G-Cter in SUMO) linkage. Tyr397 and Tyr407 each carry phosphotyrosine. Phosphotyrosine; by autocatalysis is present on Tyr397. Residues 428–434, Lys454, and 500–502 each bind ATP; these read IGEGQFG and ELC. The region spanning 431–680 is the Protein kinase domain; it reads GQFGDVHQGV…ELKAQLSTIL (250 aa). Asp546 (proton acceptor) is an active-site residue. Tyr570 is modified (phosphotyrosine). A phosphotyrosine; by RET and SRC mark is found at Tyr576 and Tyr577. The residue at position 580 (Ser580) is a Phosphoserine. Positions 685-697 are enriched in basic and acidic residues; the sequence is VQQEERMRMESRR. Disordered regions lie at residues 685–734 and 837–921; these read VQQE…PSPQ and VRLS…DRSN. The interaction with TGFB1I1 stretch occupies residues 707–1052; sequence GSDEAPPKPS…LKMLGQTRPH (346 aa). At Ser722 the chain carries Phosphoserine. Phosphoserine; by CDK5 is present on Ser732. A compositionally biased stretch (basic and acidic residues) spans 837–849; that stretch reads VRLSRGSIDREDG. Ser843 carries the phosphoserine modification. Tyr861 bears the Phosphotyrosine mark. Positions 869–880 are enriched in pro residues; it reads PAAPPKKPPRPG. Over residues 886–896 the composition is skewed to polar residues; that stretch reads SNLSSISSPAD. Ser910 is subject to Phosphoserine. Residues 912–1052 form an interaction with ARHGEF28 region; sequence PPTANLDRSN…LKMLGQTRPH (141 aa). Thr914 is modified (phosphothreonine). Phosphotyrosine; by SRC is present on Tyr925.

Belongs to the protein kinase superfamily. Tyr protein kinase family. FAK subfamily. Interacts with GIT1. Component of a complex that contains at least FER, CTTN and PTK2/FAK1. Interacts with BMX. Interacts with STEAP4. Interacts with ZFYVE21. Interacts with ESR1. Interacts with FGR, FLT4 and RET. Interacts with EPHA2 in resting cells; activation of EPHA2 recruits PTPN11, leading to dephosphorylation of PTK2/FAK1 and dissociation of the complex. Interacts with EPHA1 (kinase activity-dependent). Interacts with MISP. Interacts with PIAS1. Interacts with ARHGAP26 and SHC1. Interacts with RB1CC1; this inhibits PTK2/FAK1 activity and activation of downstream signaling pathways. Interacts with P53/TP53. Interacts with STAT1. Interacts with WASL. Interacts with ARHGEF7. Interacts with DCC. Interacts (via first Pro-rich region) with CAS family members (via SH3 domain), including BCAR1, BCAR3 and CASS4. Interacts with NEDD9 (via C-terminus). Interacts with SORBS1. Interacts with ARHGEF28. Interacts with SHB. Part of a complex composed of THSD1, PTK2/FAK1, TLN1 and VCL. Interacts with PXN and TLN1. Interacts with TGFB1I1. Interacts with PIK3R1 or PIK3R2. Interacts with SRC, GRB2 and GRB7. Interacts with LPXN (via LD motif 3). Interacts with CD36. Interacts with EMP2; regulates PTK2 activation and localization. Interacts with DSCAM. Interacts with AMBRA1. Interacts (when tyrosine-phosphorylated) with tensin TNS1; the interaction is increased by phosphorylation of TNS1. Post-translationally, phosphorylated on tyrosine residues upon activation, e.g. upon integrin signaling. Tyr-397 is the major autophosphorylation site, but other kinases can also phosphorylate this residue. Phosphorylation at Tyr-397 promotes interaction with SRC and SRC family members, leading to phosphorylation at Tyr-576, Tyr-577 and at additional tyrosine residues. FGR promotes phosphorylation at Tyr-397 and Tyr-576. FER promotes phosphorylation at Tyr-577, Tyr-861 and Tyr-925, even when cells are not adherent. Tyr-397, Tyr-576 and Ser-722 are phosphorylated only when cells are adherent. Phosphorylation at Tyr-397 is important for interaction with BMX, PIK3R1 and SHC1. Phosphorylation at Tyr-925 is important for interaction with GRB2. Dephosphorylated by PTPN11; PTPN11 is recruited to PTK2 via EPHA2 (tyrosine phosphorylated). Microtubule-induced dephosphorylation at Tyr-397 is crucial for the induction of focal adhesion disassembly; this dephosphorylation could be catalyzed by PTPN11 and regulated by ZFYVE21. Phosphorylation on tyrosine residues is enhanced by NTN1. Sumoylated; this enhances autophosphorylation.

The protein resides in the cell junction. It is found in the focal adhesion. The protein localises to the cell membrane. Its subcellular location is the cytoplasm. It localises to the perinuclear region. The protein resides in the cell cortex. It is found in the cytoskeleton. The protein localises to the microtubule organizing center. Its subcellular location is the centrosome. It localises to the nucleus. The protein resides in the cilium basal body. It carries out the reaction L-tyrosyl-[protein] + ATP = O-phospho-L-tyrosyl-[protein] + ADP + H(+). Its activity is regulated as follows. Subject to autoinhibition, mediated by interactions between the FERM domain and the kinase domain. Activated by autophosphorylation at Tyr-397. This promotes interaction with SRC and phosphorylation at Tyr-576 and Tyr-577 in the kinase activation loop by SRC. Phosphorylation at Tyr-397, Tyr-576 and Tyr-577 is required for maximal kinase activity. Functionally, non-receptor protein-tyrosine kinase that plays an essential role in regulating cell migration, adhesion, spreading, reorganization of the actin cytoskeleton, formation and disassembly of focal adhesions and cell protrusions, cell cycle progression, cell proliferation and apoptosis. Required for early embryonic development and placenta development. Required for embryonic angiogenesis, normal cardiomyocyte migration and proliferation, and normal heart development. Regulates axon growth and neuronal cell migration, axon branching and synapse formation; required for normal development of the nervous system. Plays a role in osteogenesis and differentiation of osteoblasts. Functions in integrin signal transduction, but also in signaling downstream of numerous growth factor receptors, G-protein coupled receptors (GPCR), EPHA2, netrin receptors and LDL receptors. Forms multisubunit signaling complexes with SRC and SRC family members upon activation; this leads to the phosphorylation of additional tyrosine residues, creating binding sites for scaffold proteins, effectors and substrates. Regulates numerous signaling pathways. Promotes activation of phosphatidylinositol 3-kinase and the AKT1 signaling cascade. Promotes activation of MAPK1/ERK2, MAPK3/ERK1 and the MAP kinase signaling cascade. Promotes localized and transient activation of guanine nucleotide exchange factors (GEFs) and GTPase-activating proteins (GAPs), and thereby modulates the activity of Rho family GTPases. Signaling via CAS family members mediates activation of RAC1. Phosphorylates NEDD9 following integrin stimulation. Recruits the ubiquitin ligase MDM2 to P53/TP53 in the nucleus, and thereby regulates P53/TP53 activity, P53/TP53 ubiquitination and proteasomal degradation. Phosphorylates SRC; this increases SRC kinase activity. Phosphorylates ACTN1, ARHGEF7, GRB7, RET and WASL. Promotes phosphorylation of PXN and STAT1; most likely PXN and STAT1 are phosphorylated by a SRC family kinase that is recruited to autophosphorylated PTK2/FAK1, rather than by PTK2/FAK1 itself. Promotes phosphorylation of BCAR1; GIT2 and SHC1; this requires both SRC and PTK2/FAK1. Promotes phosphorylation of BMX and PIK3R1. Its function is as follows. Does not contain a kinase domain and inhibits PTK2/FAK1 phosphorylation and signaling. Its enhanced expression can attenuate the nuclear accumulation of LPXN and limit its ability to enhance serum response factor (SRF)-dependent gene transcription. The sequence is that of Focal adhesion kinase 1 from Mus musculus (Mouse).